We begin with the raw amino-acid sequence, 490 residues long: MEMANDKVAETVIVGNYVEMESEGKPPQDIKSKLSNFLWHGGSAYDAWFSCASNQVAQVLLTLPYSFSQLGMLSGILFQLFYGILGSWTAYLISILYVEYRTRKEREKVNFRSHVIQWFEVLDGLLGKHWRNVGLGFNCTFLLFGSVIQLIACASNIYYINDNLDKRTWTYIFGACCATTVFIPSFHNYRIWSFLGLVMTTYTAWYLTIAAVLHGQVEGVKHSGPNKIILYFTGATNILYTFGGHAVTVEIMHAMWKPQKFKAIYLLATLYVLTLTIPSATAVYWAFGDMLLNHSNAFALLPKSPFRDMAVILMLIHQFITFGFACTPLYFVWEKTVGMHECKSLCKRALVRLPVVIPIWFLAIIFPFFGPINSTVGSLLVSFTVYIIPALAHIFTFKSSSARQNAVEQPPKFVGRWVGTFVINVFIVVWVLIVGFGFGGWASMVNFVHQIDTFGLFTKCYQCPPPTPSVPTMPPHQMNATAPSPHHHHH.

Residues Met-1–Gln-55 are Cytoplasmic-facing. The chain crosses the membrane as a helical span at residues Val-56 to Leu-73. At Ser-74–Gly-75 the chain is on the extracellular side. The chain crosses the membrane as a helical span at residues Ile-76–Leu-96. At Tyr-97–Asn-132 the chain is on the cytoplasmic side. A helical membrane pass occupies residues Val-133–Cys-153. Topologically, residues Ala-154–Thr-168 are extracellular. A helical transmembrane segment spans residues Trp-169–Tyr-189. Arg-190 is a topological domain (cytoplasmic). Residues Ile-191–Ala-211 traverse the membrane as a helical segment. At Val-212 to Lys-227 the chain is on the extracellular side. The chain crosses the membrane as a helical span at residues Ile-228 to Thr-248. Over Val-249–Lys-262 the chain is Cytoplasmic. A helical transmembrane segment spans residues Ala-263–Val-283. Residues Tyr-284 to Ala-310 are Extracellular-facing. The N-linked (GlcNAc...) asparagine glycan is linked to Asn-293. A helical membrane pass occupies residues Val-311–Phe-331. Residues Val-332–Arg-352 are Cytoplasmic-facing. The helical transmembrane segment at Leu-353 to Asn-373 threads the bilayer. At Ser-374–Val-376 the chain is on the extracellular side. Residues Gly-377 to Phe-397 form a helical membrane-spanning segment. Residues Lys-398–Thr-420 lie on the Cytoplasmic side of the membrane. The helical transmembrane segment at Phe-421–Trp-441 threads the bilayer. Residues Ala-442 to His-490 lie on the Extracellular side of the membrane. Residue Asn-479 is glycosylated (N-linked (GlcNAc...) asparagine).

It belongs to the amino acid/polyamine transporter 2 family. Amino acid/auxin permease (AAAP) (TC 2.A.18.1) subfamily. Shoots and roots of nodulating plants, at low levels.

Its subcellular location is the cell membrane. Functionally, carrier protein involved in proton-driven auxin influx. Mediates the formation of auxin gradient from developing leaves (site of auxin biosynthesis) to tips by contributing to the loading of auxin in vascular tissues and facilitating acropetal (base to tip) auxin transport within inner tissues of the root apex, and basipetal (tip to base) auxin transport within outer tissues of the root apex. May be involved in lateral roots and nodules formation. This Medicago truncatula (Barrel medic) protein is Auxin transporter-like protein 5 (LAX5).